Reading from the N-terminus, the 317-residue chain is Homoserine O-succinyltransferase (317 aa).

The Acyl-thioester intermediate role is filled by Cys-142. Residues Lys-163 and Ser-192 each contribute to the substrate site. His-235 serves as the catalytic Proton acceptor. Glu-237 is a catalytic residue. Arg-249 is a substrate binding site.

This sequence belongs to the MetA family.

Its subcellular location is the cytoplasm. It catalyses the reaction L-homoserine + succinyl-CoA = O-succinyl-L-homoserine + CoA. It functions in the pathway amino-acid biosynthesis; L-methionine biosynthesis via de novo pathway; O-succinyl-L-homoserine from L-homoserine: step 1/1. Functionally, transfers a succinyl group from succinyl-CoA to L-homoserine, forming succinyl-L-homoserine. The protein is Homoserine O-succinyltransferase of Aeromonas hydrophila subsp. hydrophila (strain ATCC 7966 / DSM 30187 / BCRC 13018 / CCUG 14551 / JCM 1027 / KCTC 2358 / NCIMB 9240 / NCTC 8049).